The sequence spans 136 residues: MAKAIPKKGSRGRIGSRKSTRKIPKGVIHIQASFNNTIVTVTDVRGRVVSWSSAGTSGFRGTKRGTPFAAQTAAGHAIRAVVDQGMQRAEVMIKGPGLGRDAALRAIRRSGILLTFVRDVTPMPHNGCRPPKKRRV.

The interval 1 to 22 is disordered; the sequence is MAKAIPKKGSRGRIGSRKSTRK.

Belongs to the universal ribosomal protein uS11 family. Part of the 30S ribosomal subunit.

It localises to the plastid. It is found in the chloroplast. The chain is Small ribosomal subunit protein uS11c from Lactuca sativa (Garden lettuce).